Reading from the N-terminus, the 178-residue chain is MSIENLKAALPEYAKDLKLNLGSISRTTVLDEEQLWGTLLASAAATRNAQVLAEIGAEAADNLSAQAYQAALGAVSIMGMNNVFYRGRGFLEGQYDDLRAGLRMNIIANPGVDKANFELWSFAVSSVNGCSHCVVAHEHTLREAGVGREAVFEALKAAAIVCGVAQALTAAQTLAAVG.

Cys130 serves as the catalytic Proton donor. Cys130 and Cys133 are joined by a disulfide. Cys133 serves as the catalytic Cysteine sulfenic acid (-SOH) intermediate.

It belongs to the AhpD family. Homotrimer.

The catalysed reaction is N(6)-[(R)-dihydrolipoyl]-L-lysyl-[lipoyl-carrier protein] + a hydroperoxide = N(6)-[(R)-lipoyl]-L-lysyl-[lipoyl-carrier protein] + an alcohol + H2O. In terms of biological role, antioxidant protein with alkyl hydroperoxidase activity. Required for the reduction of the AhpC active site cysteine residues and for the regeneration of the AhpC enzyme activity. In Mycobacterium ulcerans (strain Agy99), this protein is Alkyl hydroperoxide reductase AhpD.